A 74-amino-acid polypeptide reads, in one-letter code: Brevinin-2Ef (74 aa).

The signal sequence occupies residues 1–22 (MFTMKKSLLLIFFLGTISLSLC). The propeptide occupies 23 to 41 (QEERNADDDDGEMTEEEKR). Cys-68 and Cys-74 form a disulfide bridge.

This sequence belongs to the frog skin active peptide (FSAP) family. Brevinin subfamily. As to expression, expressed by the skin glands.

The protein resides in the secreted. Its function is as follows. Shows antibacterial activity against representative Gram-negative and Gram-positive bacterial species, and hemolytic activity. This chain is Brevinin-2Ef, found in Pelophylax lessonae (Pool frog).